The sequence spans 4923 residues: Bridge-like lipid transfer protein family member 1 (4923 aa).

A helical membrane pass occupies residues 25 to 45; that stretch reads FVWLLVATIMSCGWIIYLTYY. Disordered regions lie at residues 160–179, 606–631, 1203–1277, 1300–1334, 1357–1400, 1471–1494, 1630–1660, 1878–1948, 2191–2235, 2262–2281, 2355–2375, 2550–2655, 2885–2910, 3564–3596, 3645–3695, 3739–3797, 3848–3884, 4017–4071, 4102–4124, 4249–4309, and 4797–4827; these read NRDEEKGREQRDKSLESVHI, HSKSPPDNNMPAEGQGAPPKNSKPRW, SLHV…SARL, FSSEVSRSDENVLDSPRQRRSYGSFPFTPSADSST, TEEF…SVEG, TNKRTSKSSLHRPLDLDTPTSEES, SAAKQEHKISKTEGTTPGSLSTPHGQTDLSI, RDGV…PDSS, SKSH…LQCN, PHRANEQTATKSSSLTRTGN, NTLDTHSQHSHSQHSTSQEDL, RYTA…SEQS, IRQPSNTPPPNREDTPTPQPSEVSIN, YSNSRSKSISAAGRPPMKRSDRPREDLPDIKVE, FSPT…RKSA, LHPS…SLQS, GMRDAPTPAPAPAASGPGKTNTLLSPPPPPLPSAKGK, PTSA…TGPP, AVTGLPPGPGPLGSVEDEASSVT, DGQT…AAAQ, and RMFASRPGQKSPTTQQDEPSSDKKEEREKEE. Over residues 1210 to 1226 the composition is skewed to low complexity; that stretch reads SHSSASSSEENSSSSAA. Polar residues predominate over residues 1237 to 1248; it reads PSPSTELMNVTT. Residues 1260-1271 are compositionally biased toward low complexity; it reads SPLRSPLKRQSS. Residues 1641–1658 are compositionally biased toward polar residues; the sequence is TEGTTPGSLSTPHGQTDL. Residues 1887-1898 are compositionally biased toward low complexity; that stretch reads SSGSQTGSGYST. The segment covering 1907–1920 has biased composition (polar residues); that stretch reads NDAQSPASEPNNNS. Positions 1921-1931 are enriched in acidic residues; that stretch reads DSDEQDEGVES. Composition is skewed to polar residues over residues 2208-2218 and 2267-2281; these read PYQSLSYTSGD and EQTATKSSSLTRTGN. A compositionally biased stretch (polar residues) spans 2550-2560; it reads RYTAGSSSPTP. Positions 2606-2624 are enriched in basic and acidic residues; it reads TRSREPRGRGTLGRSERRT. The span at 3581–3595 shows a compositional bias: basic and acidic residues; it reads KRSDRPREDLPDIKV. The segment covering 3746–3770 has biased composition (basic and acidic residues); sequence TEHEDLALRRSCERSSRSLDQDSPP. Residues 4017–4039 show a composition bias toward polar residues; it reads PTSATYPSEGQHTPSSTPPSVHN. The span at 4044–4056 shows a compositional bias: low complexity; it reads PGGPSTGLGSPLG. Polar residues-rich tracts occupy residues 4249-4268, 4276-4286, and 4804-4814; these read DGQTTQHPSSSVFTDTTPSH, TGRTRSVSDSS, and GQKSPTTQQDE. Residues 4816 to 4827 show a composition bias toward basic and acidic residues; it reads SSDKKEEREKEE.

Its subcellular location is the cell membrane. It localises to the endoplasmic reticulum membrane. The protein localises to the mitochondrion membrane. Functionally, tube-forming lipid transport protein which provides phosphatidylethanolamine for glycosylphosphatidylinositol (GPI) anchor synthesis in the endoplasmic reticulum. Plays a role in endosomal trafficking and endosome recycling. Also involved in the actin cytoskeleton and cilia structural dynamics. Acts as a regulator of phagocytosis. This Danio rerio (Zebrafish) protein is Bridge-like lipid transfer protein family member 1 (bltp1).